Here is a 62-residue protein sequence, read N- to C-terminus: Conotoxin TsMLCL-02 (62 aa).

The first 19 residues, 1-19, serve as a signal peptide directing secretion; it reads MLCLPVFIILLLLASPAAP. Positions 20 to 54 are excised as a propeptide; sequence NPLERRIQSDLIRAALEDADMKTEKGILSSIMGTL.

It belongs to the conotoxin T superfamily. As to expression, expressed by the venom duct.

Its subcellular location is the secreted. This Conus tessulatus (Tessellate cone) protein is Conotoxin TsMLCL-02.